The sequence spans 149 residues: Ribonuclease H (149 aa).

An RNase H type-1 domain is found at 5 to 146 (QRPHVVIFTD…ADELAREGLA (142 aa)). The Mg(2+) site is built by D14, E52, D74, and D138.

The protein belongs to the RNase H family. In terms of assembly, monomer. It depends on Mg(2+) as a cofactor.

The protein localises to the cytoplasm. It carries out the reaction Endonucleolytic cleavage to 5'-phosphomonoester.. In terms of biological role, endonuclease that specifically degrades the RNA of RNA-DNA hybrids. The polypeptide is Ribonuclease H (Afipia carboxidovorans (strain ATCC 49405 / DSM 1227 / KCTC 32145 / OM5) (Oligotropha carboxidovorans)).